Consider the following 103-residue polypeptide: Large ribosomal subunit protein bL21 (103 aa).

This sequence belongs to the bacterial ribosomal protein bL21 family. In terms of assembly, part of the 50S ribosomal subunit. Contacts protein L20.

Its function is as follows. This protein binds to 23S rRNA in the presence of protein L20. This chain is Large ribosomal subunit protein bL21, found in Desulfotalea psychrophila (strain LSv54 / DSM 12343).